The primary structure comprises 346 residues: Cytidine deaminase 5 (346 aa).

2 consecutive CMP/dCMP-type deaminase domains span residues 20 to 148 (TDHK…FGSE) and 183 to 304 (DLCS…ITGA). Substrate is bound at residue 58–60 (NVE). Histidine 71 serves as a coordination point for Zn(2+). Glutamate 73 (proton donor) is an active-site residue. Cysteine 104 and cysteine 107 together coordinate Zn(2+).

This sequence belongs to the cytidine and deoxycytidylate deaminase family. In terms of assembly, homodimer. Zn(2+) serves as cofactor.

It catalyses the reaction cytidine + H2O + H(+) = uridine + NH4(+). It carries out the reaction 2'-deoxycytidine + H2O + H(+) = 2'-deoxyuridine + NH4(+). In terms of biological role, this enzyme scavenges exogenous and endogenous cytidine and 2'-deoxycytidine for UMP synthesis. The polypeptide is Cytidine deaminase 5 (CDA5) (Arabidopsis thaliana (Mouse-ear cress)).